The primary structure comprises 410 residues: Arginine deiminase (410 aa).

The active-site Amidino-cysteine intermediate is the Cys-398.

It belongs to the arginine deiminase family.

The protein resides in the cytoplasm. It catalyses the reaction L-arginine + H2O = L-citrulline + NH4(+). Its pathway is amino-acid degradation; L-arginine degradation via ADI pathway; carbamoyl phosphate from L-arginine: step 1/2. The polypeptide is Arginine deiminase (Limosilactobacillus reuteri (strain DSM 20016) (Lactobacillus reuteri)).